Here is a 212-residue protein sequence, read N- to C-terminus: Ribonuclease HII (212 aa).

Positions 17–211 (ANLAGIDEAG…VIEALLSLEQ (195 aa)) constitute an RNase H type-2 domain. 3 residues coordinate a divalent metal cation: Asp23, Glu24, and Asp120.

This sequence belongs to the RNase HII family. It depends on Mn(2+) as a cofactor. The cofactor is Mg(2+).

The protein localises to the cytoplasm. The catalysed reaction is Endonucleolytic cleavage to 5'-phosphomonoester.. Endonuclease that specifically degrades the RNA of RNA-DNA hybrids. The chain is Ribonuclease HII from Chloroflexus aurantiacus (strain ATCC 29364 / DSM 637 / Y-400-fl).